Consider the following 403-residue polypeptide: Protein-export membrane protein SecD (403 aa).

The next 6 membrane-spanning stretches (helical) occupy residues 13–33, 245–265, 285–305, 306–326, 347–367, and 368–388; these read LLVI…KGVN, FLKM…VIIA, VVFL…PALA, GIIL…DEIV, VVLA…VAGM, and GLLK…VVIT.

This sequence belongs to the SecD/SecF family. SecD subfamily. Part of the protein translocation apparatus. Forms a complex with SecF.

It is found in the cell membrane. In terms of biological role, involved in protein export. The protein is Protein-export membrane protein SecD of Methanopyrus kandleri (strain AV19 / DSM 6324 / JCM 9639 / NBRC 100938).